Consider the following 211-residue polypeptide: Imidazole glycerol phosphate synthase subunit HisH (211 aa).

The Glutamine amidotransferase type-1 domain occupies 3-211 (VVAVIDYEMG…VSQVREKIAA (209 aa)). The active-site Nucleophile is the Cys-81. Residues His-186 and Glu-188 contribute to the active site.

Heterodimer of HisH and HisF.

Its subcellular location is the cytoplasm. It carries out the reaction 5-[(5-phospho-1-deoxy-D-ribulos-1-ylimino)methylamino]-1-(5-phospho-beta-D-ribosyl)imidazole-4-carboxamide + L-glutamine = D-erythro-1-(imidazol-4-yl)glycerol 3-phosphate + 5-amino-1-(5-phospho-beta-D-ribosyl)imidazole-4-carboxamide + L-glutamate + H(+). The catalysed reaction is L-glutamine + H2O = L-glutamate + NH4(+). It functions in the pathway amino-acid biosynthesis; L-histidine biosynthesis; L-histidine from 5-phospho-alpha-D-ribose 1-diphosphate: step 5/9. Its function is as follows. IGPS catalyzes the conversion of PRFAR and glutamine to IGP, AICAR and glutamate. The HisH subunit catalyzes the hydrolysis of glutamine to glutamate and ammonia as part of the synthesis of IGP and AICAR. The resulting ammonia molecule is channeled to the active site of HisF. This chain is Imidazole glycerol phosphate synthase subunit HisH, found in Nostoc sp. (strain PCC 7120 / SAG 25.82 / UTEX 2576).